The primary structure comprises 316 residues: tRNA dimethylallyltransferase (316 aa).

Residue 17–24 (GPTASGKT) participates in ATP binding. Substrate is bound at residue 19–24 (TASGKT). Interaction with substrate tRNA regions lie at residues 42–45 (DSAL), 166–170 (QRLSR), and 247–252 (RCVGYR).

It belongs to the IPP transferase family. Monomer. The cofactor is Mg(2+).

The catalysed reaction is adenosine(37) in tRNA + dimethylallyl diphosphate = N(6)-dimethylallyladenosine(37) in tRNA + diphosphate. Catalyzes the transfer of a dimethylallyl group onto the adenine at position 37 in tRNAs that read codons beginning with uridine, leading to the formation of N6-(dimethylallyl)adenosine (i(6)A). This is tRNA dimethylallyltransferase from Erwinia tasmaniensis (strain DSM 17950 / CFBP 7177 / CIP 109463 / NCPPB 4357 / Et1/99).